The following is a 233-amino-acid chain: MEAPAPSLTEEDLTEVKKDALENLRVYLCEKIIAERHFDHLRAKKILSREDTEEISCRTSSRKRAGKLLDYLQENPKGLDTLVESIRREKTQNFLIQKITDEVLKLRNIKLEHLKGLKCSSCEPFAAGATNNLSRSNSDESNFSEKQRPSTVIYHPEGESSTAPFFSTESSLNLPVLEVGRLENSSFSSASLPRPGDPGAPPLPPDLRLEEGGSCGNSSEMFLPLRSRALSRQ.

Met-1 carries the N-acetylmethionine modification. The CARD domain maps to 13–101 (LTEVKKDALE…QNFLIQKITD (89 aa)). Glycyl lysine isopeptide (Lys-Gly) (interchain with G-Cter in ubiquitin) cross-links involve residues Lys-17, Lys-31, and Lys-63. The span at 130–141 (TNNLSRSNSDES) shows a compositional bias: polar residues. 2 disordered regions span residues 130-149 (TNNL…KQRP) and 186-233 (SFSS…LSRQ). A Phosphoserine modification is found at Ser-138. A compositionally biased stretch (pro residues) spans 195–205 (PGDPGAPPLPP).

In terms of assembly, homomultimer; homooligomerized following recruitment by CARD domain-containing proteins that form a nucleating helical template that recruits BCL10 via CARD-CARD interaction. Self-associates by CARD-CARD interaction and interacts with other CARD-proteins such as CARD9, CARD10, CARD11 and CARD14. Forms a complex with CARD14 and MALT1; resulting in the formation of a CBM (CARD14-BCL10-MALT1) complex. Forms a complex with CARD11 and MALT1; resulting in the formation of a CBM (CARD11-BCL10-MALT1) complex. Forms a complex with CARD9 and MALT1; resulting in the formation of a CBM (CARD9-BCL10-MALT1) complex. Found in a membrane raft complex, at least composed of BCL10, CARD11, DPP4 and IKBKB. Binds caspase-9 with its C-terminal domain. Interacts with TRAF2 and BIRC2/c-IAP2. Interacts with PELI2 and SOCS3; these interactions may be mutually exclusive. In terms of processing, phosphorylated. Phosphorylation results in dissociation from TRAF2 and binding to BIRC2/c-IAP2. Phosphorylated by IKBKB/IKKB. Post-translationally, ubiquitinated via both 'Lys-63'-linked and linear ('Met-1'-linked) polyubiquitin chains in response to T-cell receptor (TCR) activation. Ubiquitination is recognized by IKBKG/NEMO, the regulatory subunit of I-kappa-B kinase (IKK), and is required for TCR-induced NF-kappa-B activation. Linear ubiquitination at Lys-17, Lys-31 and Lys-63 is mediated by RNF31/HOIP; linear ubiquitination is recognized with much higher affinity than 'Lys-63'-linked ubiquitin by IKBKG/NEMO. CARD11 is required for linear ubiquitination by HOIP by promoting the targeting of BCL10 to RNF31/HOIP. Proteolytically cleaved by MALT1; required for T-cell activation.

Its subcellular location is the cytoplasm. The protein localises to the perinuclear region. The protein resides in the membrane raft. Plays a key role in both adaptive and innate immune signaling by bridging CARD domain-containing proteins to immune activation. Acts by channeling adaptive and innate immune signaling downstream of CARD domain-containing proteins CARD9, CARD11 and CARD14 to activate NF-kappa-B and MAP kinase p38 (MAPK11, MAPK12, MAPK13 and/or MAPK14) pathways which stimulate expression of genes encoding pro-inflammatory cytokines and chemokines. Recruited by activated CARD domain-containing proteins: homooligomerized CARD domain-containing proteins form a nucleating helical template that recruits BCL10 via CARD-CARD interaction, thereby promoting polymerization of BCL10, subsequent recruitment of MALT1 and formation of a CBM complex. This leads to activation of NF-kappa-B and MAP kinase p38 (MAPK11, MAPK12, MAPK13 and/or MAPK14) pathways which stimulate expression of genes encoding pro-inflammatory cytokines and chemokines. Activated by CARD9 downstream of C-type lectin receptors; CARD9-mediated signals are essential for antifungal immunity. Activated by CARD11 downstream of T-cell receptor (TCR) and B-cell receptor (BCR). Promotes apoptosis, pro-caspase-9 maturation and activation of NF-kappa-B via NIK and IKK. The polypeptide is B-cell lymphoma/leukemia 10 (Rattus norvegicus (Rat)).